The primary structure comprises 454 residues: Mannosylfructose-phosphate synthase (454 aa).

It belongs to the glycosyltransferase 1 family. The cofactor is Mg(2+). Mn(2+) is required as a cofactor.

It carries out the reaction beta-D-fructose 6-phosphate + GDP-alpha-D-mannose = beta-D-fructofuranosyl alpha-D-mannopyranoside 6(F)-phosphate + GDP + H(+). The protein operates within carbohydrate metabolism; mannosylfructose biosynthesis; beta-D-fructofuranosyl alpha-D-mannopyranoside from D-fructose 6-phosphate and GDP-alpha-D-mannose: step 1/2. This chain is Mannosylfructose-phosphate synthase, found in Agrobacterium fabrum (strain C58 / ATCC 33970) (Agrobacterium tumefaciens (strain C58)).